A 167-amino-acid chain; its full sequence is N-alpha-acetyltransferase (167 aa).

Residues Tyr12–Leu167 form the N-acetyltransferase domain. Tyr37 serves as a coordination point for substrate. Residue His88 coordinates Zn(2+). Acetyl-CoA-binding positions include Ile92–Val94 and Arg100–Thr105. Glu127 is a binding site for Zn(2+). Acetyl-CoA contacts are provided by residues Asn132 and Tyr139–Lys141. Tyr154 is a binding site for substrate.

This sequence belongs to the acetyltransferase family. ARD1 subfamily. Homodimer.

It is found in the cytoplasm. It catalyses the reaction N-terminal L-alanyl-[protein] + acetyl-CoA = N-terminal N(alpha)-acetyl-L-alanyl-[protein] + CoA + H(+). It carries out the reaction N-terminal L-seryl-[protein] + acetyl-CoA = N-terminal N(alpha)-acetyl-L-seryl-[protein] + CoA + H(+). The catalysed reaction is N-terminal L-methionyl-L-leucyl-[protein] + acetyl-CoA = N-terminal N(alpha)-acetyl-L-methionyl-L-leucyl-[protein] + CoA + H(+). The enzyme catalyses N-terminal L-methionyl-L-glutamyl-[protein] + acetyl-CoA = N-terminal N(alpha)-acetyl-L-methionyl-L-glutamyl-[protein] + CoA + H(+). Its function is as follows. Displays alpha (N-terminal) acetyltransferase activity. Catalyzes the covalent attachment of an acetyl moiety from acetyl-CoA to the free alpha-amino group at the N-terminus of a protein. The chain is N-alpha-acetyltransferase from Sulfurisphaera tokodaii (strain DSM 16993 / JCM 10545 / NBRC 100140 / 7) (Sulfolobus tokodaii).